The sequence spans 173 residues: ATP-dependent protease subunit HslV (173 aa).

Thr-2 is an active-site residue. Na(+) is bound by residues Gly-158, Asp-161, and Ser-164.

The protein belongs to the peptidase T1B family. HslV subfamily. As to quaternary structure, a double ring-shaped homohexamer of HslV is capped on each side by a ring-shaped HslU homohexamer. The assembly of the HslU/HslV complex is dependent on binding of ATP.

Its subcellular location is the cytoplasm. The catalysed reaction is ATP-dependent cleavage of peptide bonds with broad specificity.. With respect to regulation, allosterically activated by HslU binding. Its function is as follows. Protease subunit of a proteasome-like degradation complex believed to be a general protein degrading machinery. The polypeptide is ATP-dependent protease subunit HslV (Glaesserella parasuis serovar 5 (strain SH0165) (Haemophilus parasuis)).